Here is a 244-residue protein sequence, read N- to C-terminus: Small ribosomal subunit protein uS3 (244 aa).

Residues 39–107 enclose the KH type-2 domain; that stretch reads VREMLRKKLA…PAHINVTEVR (69 aa). Residues 213–244 are disordered; that stretch reads VGQEKQDDSPRNDRNDRGDRGDRPSRPAREAR. Basic and acidic residues predominate over residues 216-244; the sequence is EKQDDSPRNDRNDRGDRGDRPSRPAREAR.

The protein belongs to the universal ribosomal protein uS3 family. Part of the 30S ribosomal subunit. Forms a tight complex with proteins S10 and S14.

Its function is as follows. Binds the lower part of the 30S subunit head. Binds mRNA in the 70S ribosome, positioning it for translation. This is Small ribosomal subunit protein uS3 from Xanthomonas axonopodis pv. citri (strain 306).